We begin with the raw amino-acid sequence, 358 residues long: Isopentenyl-diphosphate delta-isomerase (358 aa).

12–13 (RK) serves as a coordination point for substrate. FMN is bound by residues 69-71 (AMT), S99, and N128. A substrate-binding site is contributed by Q158. E159 provides a ligand contact to Mg(2+). Residues K190, T220, 267–269 (GIR), and 288–289 (AG) contribute to the FMN site.

The protein belongs to the IPP isomerase type 2 family. As to quaternary structure, homooctamer. Dimer of tetramers. It depends on FMN as a cofactor. NADPH is required as a cofactor. Requires Mg(2+) as cofactor.

Its subcellular location is the cytoplasm. The enzyme catalyses isopentenyl diphosphate = dimethylallyl diphosphate. Its function is as follows. Involved in the biosynthesis of isoprenoids. Catalyzes the 1,3-allylic rearrangement of the homoallylic substrate isopentenyl (IPP) to its allylic isomer, dimethylallyl diphosphate (DMAPP). This chain is Isopentenyl-diphosphate delta-isomerase, found in Listeria monocytogenes serotype 4b (strain F2365).